We begin with the raw amino-acid sequence, 259 residues long: Imidazole glycerol phosphate synthase subunit HisF (259 aa).

Residues aspartate 11 and aspartate 130 contribute to the active site.

The protein belongs to the HisA/HisF family. In terms of assembly, heterodimer of HisH and HisF.

The protein localises to the cytoplasm. It carries out the reaction 5-[(5-phospho-1-deoxy-D-ribulos-1-ylimino)methylamino]-1-(5-phospho-beta-D-ribosyl)imidazole-4-carboxamide + L-glutamine = D-erythro-1-(imidazol-4-yl)glycerol 3-phosphate + 5-amino-1-(5-phospho-beta-D-ribosyl)imidazole-4-carboxamide + L-glutamate + H(+). The protein operates within amino-acid biosynthesis; L-histidine biosynthesis; L-histidine from 5-phospho-alpha-D-ribose 1-diphosphate: step 5/9. IGPS catalyzes the conversion of PRFAR and glutamine to IGP, AICAR and glutamate. The HisF subunit catalyzes the cyclization activity that produces IGP and AICAR from PRFAR using the ammonia provided by the HisH subunit. The polypeptide is Imidazole glycerol phosphate synthase subunit HisF (Variovorax paradoxus (strain S110)).